Reading from the N-terminus, the 141-residue chain is Large ribosomal subunit protein uL11 (141 aa).

It belongs to the universal ribosomal protein uL11 family. Part of the ribosomal stalk of the 50S ribosomal subunit. Interacts with L10 and the large rRNA to form the base of the stalk. L10 forms an elongated spine to which L12 dimers bind in a sequential fashion forming a multimeric L10(L12)X complex. One or more lysine residues are methylated.

Its function is as follows. Forms part of the ribosomal stalk which helps the ribosome interact with GTP-bound translation factors. The sequence is that of Large ribosomal subunit protein uL11 from Clostridium acetobutylicum (strain ATCC 824 / DSM 792 / JCM 1419 / IAM 19013 / LMG 5710 / NBRC 13948 / NRRL B-527 / VKM B-1787 / 2291 / W).